A 207-amino-acid chain; its full sequence is 8-oxoguanine DNA glycosylase/AP lyase (207 aa).

Residues lysine 128 and aspartate 146 contribute to the active site.

This sequence belongs to the type-2 OGG1 family.

The catalysed reaction is 2'-deoxyribonucleotide-(2'-deoxyribose 5'-phosphate)-2'-deoxyribonucleotide-DNA = a 3'-end 2'-deoxyribonucleotide-(2,3-dehydro-2,3-deoxyribose 5'-phosphate)-DNA + a 5'-end 5'-phospho-2'-deoxyribonucleoside-DNA + H(+). In terms of biological role, catalyzes the excision of an oxidatively damaged form of guanine (7,8-dihydro-8-oxoguanine = 8-oxoG) from DNA. Also cleaves the DNA backbone at apurinic/apyrimidinic sites (AP sites). The chain is 8-oxoguanine DNA glycosylase/AP lyase from Saccharolobus islandicus (strain L.S.2.15 / Lassen #1) (Sulfolobus islandicus).